We begin with the raw amino-acid sequence, 607 residues long: UvrABC system protein C (607 aa).

The GIY-YIG domain occupies 16–94; sequence GRPGVYRMFD…IKEWRPPYNI (79 aa). The UVR domain occupies 203-238; that stretch reads HALTNELSTAMEEAAINLEFERAAELRDQIALLRRV.

It belongs to the UvrC family. Interacts with UvrB in an incision complex.

The protein localises to the cytoplasm. The UvrABC repair system catalyzes the recognition and processing of DNA lesions. UvrC both incises the 5' and 3' sides of the lesion. The N-terminal half is responsible for the 3' incision and the C-terminal half is responsible for the 5' incision. This Pseudomonas fluorescens (strain Pf0-1) protein is UvrABC system protein C.